A 137-amino-acid polypeptide reads, in one-letter code: MGENEGIDKSFLDTVKFDDRGLIPAIVQDHETGKVLMMAWMNRESLEMTLERKKACYWSRSRNKLWLKGESSGNMQEVFDILIDCDGDTLILKVSQIGGACHVGYHSCFYRKVNEDGSMQICDTLMFNPEEVYGKKH.

Asp84 contacts Mg(2+). Cys85 is a binding site for Zn(2+). Mg(2+) is bound by residues Asp86 and Asp88. Zn(2+)-binding residues include Cys101 and Cys108.

Belongs to the PRA-CH family. Homodimer. Mg(2+) serves as cofactor. It depends on Zn(2+) as a cofactor.

It is found in the cytoplasm. The enzyme catalyses 1-(5-phospho-beta-D-ribosyl)-5'-AMP + H2O = 1-(5-phospho-beta-D-ribosyl)-5-[(5-phospho-beta-D-ribosylamino)methylideneamino]imidazole-4-carboxamide. It functions in the pathway amino-acid biosynthesis; L-histidine biosynthesis; L-histidine from 5-phospho-alpha-D-ribose 1-diphosphate: step 3/9. In terms of biological role, catalyzes the hydrolysis of the adenine ring of phosphoribosyl-AMP. This Chlorobium phaeovibrioides (strain DSM 265 / 1930) (Prosthecochloris vibrioformis (strain DSM 265)) protein is Phosphoribosyl-AMP cyclohydrolase.